Here is a 481-residue protein sequence, read N- to C-terminus: NADH-quinone oxidoreductase subunit N (481 aa).

A run of 14 helical transmembrane segments spans residues 11 to 31 (ALPEVALLSLLVLLLPADLWA), 38 to 58 (WTHYGALATVAVTAAVQLAVW), 74 to 94 (GMSRLAKMVLYALTFVLFVYA), 103 to 123 (IFKGEFYTLSLFALLGMSVMV), 128 to 148 (FLTAYIGLELLSLALYALIAL), 163 to 183 (FVLGALASGLLLYGISMVYGA), 208 to 228 (LGLVFIVVAVAFKLGAVPFHM), 241 to 261 (VTALVGTAPKIAAVVFAFRIL), 272 to 292 (WSLMFALLAAASLLVGNLAAI), 300 to 322 (MLAYSTVSHMGFILLAFMAGAVG), 332 to 352 (TYALMAAAGFGVLMVLSDGDN), 368 to 388 (VWLAFLMLLVMFSMAGIPPLM), 404 to 424 (GYVWLSVFAVVMSLVGAFYYL), and 450 to 470 (SLLSVNALLLVLWGIMPQTVI).

Belongs to the complex I subunit 2 family. NDH-1 is composed of 14 different subunits. Subunits NuoA, H, J, K, L, M, N constitute the membrane sector of the complex.

Its subcellular location is the cell inner membrane. It carries out the reaction a quinone + NADH + 5 H(+)(in) = a quinol + NAD(+) + 4 H(+)(out). Its function is as follows. NDH-1 shuttles electrons from NADH, via FMN and iron-sulfur (Fe-S) centers, to quinones in the respiratory chain. The immediate electron acceptor for the enzyme in this species is believed to be ubiquinone. Couples the redox reaction to proton translocation (for every two electrons transferred, four hydrogen ions are translocated across the cytoplasmic membrane), and thus conserves the redox energy in a proton gradient. The chain is NADH-quinone oxidoreductase subunit N from Neisseria gonorrhoeae (strain ATCC 700825 / FA 1090).